The sequence spans 45 residues: Defensin Tk-AMP-D3 (45 aa).

Cystine bridges form between cysteine 3–cysteine 45, cysteine 14–cysteine 34, cysteine 20–cysteine 39, and cysteine 24–cysteine 41.

Functionally, plant defense peptide. This chain is Defensin Tk-AMP-D3, found in Triticum kiharae (Wheat).